Reading from the N-terminus, the 353-residue chain is MYPKITIDINKLRDNATFIKNLCEKGGCKTALVVKSMCANHDIVKELDSVEVDYFADSRIQNLKKLKDLKTKKMLLRIPMLCEVEDVVKYADISMNSELDTLKALNKAAKTLNKVHSVIIMVDLGDLREGYFEAEDLKENIKEIIKLENIEIKGIGVNLTCYGAVIPKNDNLSRLCDIADELRTEFNLELPIVSGGNSSSIYLIDKGELPEGITNLRVGESMLLGRETAYGEDIIGMNNDVFELKCQIVELKEKPSLPIGEIGVDAFGNKPYYEDKGIRKRAILAIGQQDTDISSLMPIDDKLEILGASSDHLIVDVSDSNTSYKVGDIITFRMGYGALLKGFTSEYIEKELL.

Lys-35 functions as the Proton acceptor in the catalytic mechanism. Residue Lys-35 is modified to N6-(pyridoxal phosphate)lysine. Position 128 (Arg-128) interacts with substrate.

It belongs to the alanine racemase family. Homodimer. The cofactor is pyridoxal 5'-phosphate.

The enzyme catalyses L-ornithine = D-ornithine. Involved in the ornithine fermentation pathway. Catalyzes the conversion of L-ornithine to D-ornithine. OR could also racemize basic amino acids such as lysine and arginine. Serine, asparagine and alanine could be also converted by OR, but at a lower rate. The sequence is that of Ornithine racemase from Acetoanaerobium sticklandii (strain ATCC 12662 / DSM 519 / JCM 1433 / CCUG 9281 / NCIMB 10654 / HF) (Clostridium sticklandii).